We begin with the raw amino-acid sequence, 244 residues long: NAD-dependent protein deacylase SIR2rp3 (244 aa).

The Deacetylase sirtuin-type domain maps to 1-239 (MRRPNGMIAI…PAWADEVLHG (239 aa)). Position 13-32 (13-32 (GAGISAESGISTFRDQNGLW)) interacts with NAD(+). 2 residues coordinate substrate: tyrosine 57 and arginine 60. Residue 95 to 98 (QNID) coordinates NAD(+). The active-site Proton acceptor is the histidine 113. Zn(2+) is bound by residues cysteine 121 and cysteine 141. NAD(+) contacts are provided by residues 181 to 183 (GTS) and alanine 225.

The protein belongs to the sirtuin family. Class III subfamily. Zn(2+) serves as cofactor.

The protein resides in the mitochondrion. The catalysed reaction is N(6)-malonyl-L-lysyl-[protein] + NAD(+) + H2O = 2''-O-malonyl-ADP-D-ribose + nicotinamide + L-lysyl-[protein]. It carries out the reaction N(6)-succinyl-L-lysyl-[protein] + NAD(+) + H2O = 2''-O-succinyl-ADP-D-ribose + nicotinamide + L-lysyl-[protein]. The enzyme catalyses N(6)-glutaryl-L-lysyl-[protein] + NAD(+) + H2O = 2''-O-glutaryl-ADP-D-ribose + nicotinamide + L-lysyl-[protein]. Functionally, NAD-dependent lysine demalonylase, desuccinylase and deglutarylase that specifically removes malonyl, succinyl and glutaryl groups on target proteins. Has weak NAD-dependent protein deacetylase activity; however this activity may not be physiologically relevant in vivo. This chain is NAD-dependent protein deacylase SIR2rp3 (SIR2rp3), found in Trypanosoma brucei brucei (strain 927/4 GUTat10.1).